We begin with the raw amino-acid sequence, 109 residues long: Putative ankyrin repeat protein L482 (109 aa).

ANK repeat units follow at residues 1 to 26 (YLTE…NITT), 27 to 56 (NNNY…NIRS), 57 to 86 (ENNL…DIRS), and 88 to 109 (NNYA…YLVA).

The chain is Putative ankyrin repeat protein L482 from Acanthamoeba polyphaga (Amoeba).